The primary structure comprises 352 residues: Probable dual-specificity RNA methyltransferase RlmN (352 aa).

Catalysis depends on Glu93, which acts as the Proton acceptor. The region spanning 99 to 333 is the Radical SAM core domain; it reads FNYGYSVCVT…IRLERGSSID (235 aa). Cys106 and Cys336 form a disulfide bridge. Cys113, Cys117, and Cys120 together coordinate [4Fe-4S] cluster. Residues 164–165, Ser196, and Asn295 contribute to the S-adenosyl-L-methionine site; that span reads GE. The active-site S-methylcysteine intermediate is Cys336.

This sequence belongs to the radical SAM superfamily. RlmN family. The cofactor is [4Fe-4S] cluster.

It localises to the cytoplasm. The catalysed reaction is adenosine(2503) in 23S rRNA + 2 reduced [2Fe-2S]-[ferredoxin] + 2 S-adenosyl-L-methionine = 2-methyladenosine(2503) in 23S rRNA + 5'-deoxyadenosine + L-methionine + 2 oxidized [2Fe-2S]-[ferredoxin] + S-adenosyl-L-homocysteine. It carries out the reaction adenosine(37) in tRNA + 2 reduced [2Fe-2S]-[ferredoxin] + 2 S-adenosyl-L-methionine = 2-methyladenosine(37) in tRNA + 5'-deoxyadenosine + L-methionine + 2 oxidized [2Fe-2S]-[ferredoxin] + S-adenosyl-L-homocysteine. Its function is as follows. Specifically methylates position 2 of adenine 2503 in 23S rRNA and position 2 of adenine 37 in tRNAs. The sequence is that of Probable dual-specificity RNA methyltransferase RlmN from Malacoplasma penetrans (strain HF-2) (Mycoplasma penetrans).